Consider the following 620-residue polypeptide: Glutathione-regulated potassium-efflux system protein KefC (620 aa).

The next 12 helical transmembrane spans lie at H4–V24, L26–L46, S54–L74, G90–L110, V114–M134, F149–L169, M178–L198, V218–G238, G270–L290, L294–I314, W327–Q347, and S359–N379. The 120-residue stretch at Q399–T518 folds into the RCK N-terminal domain. A disordered region spans residues G597–S620.

It belongs to the monovalent cation:proton antiporter 2 (CPA2) transporter (TC 2.A.37) family. KefC subfamily. In terms of assembly, homodimer. Interacts with the regulatory subunit KefF.

The protein resides in the cell inner membrane. Its function is as follows. Pore-forming subunit of a potassium efflux system that confers protection against electrophiles. Catalyzes K(+)/H(+) antiport. The sequence is that of Glutathione-regulated potassium-efflux system protein KefC from Escherichia coli O139:H28 (strain E24377A / ETEC).